Here is a 106-residue protein sequence, read N- to C-terminus: UPF0145 protein Fphi_1781 (106 aa).

This sequence belongs to the UPF0145 family.

The polypeptide is UPF0145 protein Fphi_1781 (Francisella philomiragia subsp. philomiragia (strain ATCC 25017 / CCUG 19701 / FSC 153 / O#319-036)).